The chain runs to 286 residues: Cytosolic 5'-nucleotidase 3 (286 aa).

The Nucleophile role is filled by D38. Positions 38 and 40 each coordinate Mg(2+). Catalysis depends on D40, which acts as the Proton donor. Residues E85, S106, S153–A154, and K202 each bind substrate. D227 provides a ligand contact to Mg(2+).

It belongs to the pyrimidine 5'-nucleotidase family.

Its subcellular location is the cytoplasm. The enzyme catalyses a ribonucleoside 5'-phosphate + H2O = a ribonucleoside + phosphate. Can act both as nucleotidase and as phosphotransferase. The chain is Cytosolic 5'-nucleotidase 3 (nt5c3) from Danio rerio (Zebrafish).